The primary structure comprises 463 residues: Argininosuccinate lyase (463 aa).

2-(N(omega)-L-arginino)succinate contacts are provided by S27, N115, and T161. The active-site Proton acceptor is H162. S283 (proton donor) is an active-site residue. N291, Y323, Q328, and K331 together coordinate 2-(N(omega)-L-arginino)succinate.

It belongs to the lyase 1 family. Argininosuccinate lyase subfamily. As to quaternary structure, homotetramer.

The catalysed reaction is 2-(N(omega)-L-arginino)succinate = fumarate + L-arginine. It participates in amino-acid biosynthesis; L-arginine biosynthesis; L-arginine from L-ornithine and carbamoyl phosphate: step 3/3. The chain is Argininosuccinate lyase (ARG4) from Saccharomyces paradoxus (Yeast).